The following is a 564-amino-acid chain: Nucleoprotein (564 aa).

A binding site for the cap structure m7GTP region spans residues 54–236 (LRKNKRGEED…VTKDESSINI (183 aa)). The Mn(2+) site is built by Asp380 and Glu382. Zn(2+) is bound by residues Glu390, Cys497, His500, and Cys525. Residue Asp529 participates in Mn(2+) binding.

Belongs to the arenaviridae nucleocapsid protein family. As to quaternary structure, homomultimerizes to form the nucleocapsid. Binds to viral genomic RNA. Interacts with glycoprotein G2. Interacts with protein Z; this interaction probably directs the encapsidated genome to budding sites. Interacts with protein L; this interaction does not interfere with Z-L interaction. Interacts with host IKBKE (via Protein kinase domain); the interaction inhibits IKBKE kinase activity.

Its subcellular location is the virion. The protein resides in the host cytoplasm. Its function is as follows. Encapsidates the genome, protecting it from nucleases. The encapsidated genomic RNA is termed the nucleocapsid (NC). Serves as template for viral transcription and replication. The increased presence of protein N in host cell does not seem to trigger the switch from transcription to replication as observed in other negative strain RNA viruses. Through the interaction with host IKBKE, strongly inhibits the phosphorylation and nuclear translocation of host IRF3, a protein involved in interferon activation pathway, leading to the inhibition of interferon-beta and IRF3-dependent promoters activation. Also encodes a functional 3'-5' exoribonuclease that degrades preferentially dsRNA substrates and thereby participates in the suppression of interferon induction. This chain is Nucleoprotein, found in Calomys callosus (Large vesper mouse).